We begin with the raw amino-acid sequence, 189 residues long: Large ribosomal subunit protein bL9 (189 aa).

Belongs to the bacterial ribosomal protein bL9 family.

Binds to the 23S rRNA. This is Large ribosomal subunit protein bL9 from Brucella abortus (strain S19).